A 228-amino-acid chain; its full sequence is Auxin-responsive protein IAA16 (228 aa).

The short motif at 19–23 (LSLAL) is the EAR-like (transcriptional repression) element. The span at 28-39 (SSSGLQGNTSTA) shows a compositional bias: polar residues. Disordered stretches follow at residues 28-57 (SSSG…PAAP) and 70-90 (NLAS…AAAA). One can recognise a PB1 domain in the interval 97–214 (ARFVKVNMDG…RVLRSSDLNA (118 aa)).

Belongs to the Aux/IAA family. Homodimers and heterodimers. As to expression, expressed in roots, flowers and seedlings.

Its subcellular location is the nucleus. Functionally, aux/IAA proteins are short-lived transcriptional factors that function as repressors of early auxin response genes at low auxin concentrations. The protein is Auxin-responsive protein IAA16 (IAA16) of Oryza sativa subsp. japonica (Rice).